The following is a 311-amino-acid chain: 2-phospho-L-lactate transferase (311 aa).

Aspartate 52 and arginine 91 together coordinate 7,8-didemethyl-8-hydroxy-5-deazariboflavin.

It belongs to the CofD family. In terms of assembly, homodimer. Mg(2+) is required as a cofactor.

It carries out the reaction (2S)-lactyl-2-diphospho-5'-guanosine + 7,8-didemethyl-8-hydroxy-5-deazariboflavin = oxidized coenzyme F420-0 + GMP + H(+). Its pathway is cofactor biosynthesis; coenzyme F420 biosynthesis. With respect to regulation, inhibited by EDTA in vitro. Functionally, catalyzes the transfer of the 2-phospholactate moiety from (2S)-lactyl-2-diphospho-5'-guanosine to 7,8-didemethyl-8-hydroxy-5-deazariboflavin (FO) with the formation of oxidized coenzyme F420-0 and GMP. The polypeptide is 2-phospho-L-lactate transferase (Methanocaldococcus jannaschii (strain ATCC 43067 / DSM 2661 / JAL-1 / JCM 10045 / NBRC 100440) (Methanococcus jannaschii)).